The chain runs to 417 residues: Serine hydroxymethyltransferase (417 aa).

(6S)-5,6,7,8-tetrahydrofolate is bound by residues L112 and 116 to 118; that span reads GHL. K221 carries the N6-(pyridoxal phosphate)lysine modification. E247 contacts (6S)-5,6,7,8-tetrahydrofolate.

This sequence belongs to the SHMT family. As to quaternary structure, homodimer. Requires pyridoxal 5'-phosphate as cofactor.

The protein localises to the cytoplasm. It catalyses the reaction (6R)-5,10-methylene-5,6,7,8-tetrahydrofolate + glycine + H2O = (6S)-5,6,7,8-tetrahydrofolate + L-serine. The protein operates within one-carbon metabolism; tetrahydrofolate interconversion. Its pathway is amino-acid biosynthesis; glycine biosynthesis; glycine from L-serine: step 1/1. Catalyzes the reversible interconversion of serine and glycine with tetrahydrofolate (THF) serving as the one-carbon carrier. This reaction serves as the major source of one-carbon groups required for the biosynthesis of purines, thymidylate, methionine, and other important biomolecules. Also exhibits THF-independent aldolase activity toward beta-hydroxyamino acids, producing glycine and aldehydes, via a retro-aldol mechanism. In Borrelia duttonii (strain Ly), this protein is Serine hydroxymethyltransferase.